We begin with the raw amino-acid sequence, 418 residues long: MNIFEELKARGLVFQTTDEEALVKALTEGQVSYYTGYDPTADSLHLGHLVAILTSRRLQLAGHKPYALVGGATGLIGDPSFKDAERSLQTKETVLEWSGKIKGQLSQFLDFENGANKAELVNNYDWFSQISFIDFLRDVGKYFTVNYMMSKDSVKKRIETGISYTEFAYQIMQGYDFYELNQKFNVTLQIGGSDQWGNMTAGTELLRRKADKTGHVMTVPLITDANGKKFGKSEGNAVWLDADKTSPYEMYQFWLNVMDEDAIRFLKIFTFLSLEEIAEIEKAFDAARHERLAQKTLAKEVVTLVHGEEAFKQALNITEQLFAGNIKNLSAAELKQGLSNVPNYQVQDEDNLNIVEILVSSSISPSKRQAREDVQNGAIYLNGERIQDLDYTLTEDDKIDGQLTVIRRGKKKYAVLTY.

Tyr34 contacts L-tyrosine. The short motif at 39–48 (PTADSLHLGH) is the 'HIGH' region element. Positions 169 and 173 each coordinate L-tyrosine. Residues 229-233 (KFGKS) carry the 'KMSKS' region motif. Residue Lys232 participates in ATP binding. One can recognise an S4 RNA-binding domain in the interval 352 to 418 (LNIVEILVSS…GKKKYAVLTY (67 aa)).

Belongs to the class-I aminoacyl-tRNA synthetase family. TyrS type 1 subfamily. As to quaternary structure, homodimer.

The protein resides in the cytoplasm. The catalysed reaction is tRNA(Tyr) + L-tyrosine + ATP = L-tyrosyl-tRNA(Tyr) + AMP + diphosphate + H(+). Catalyzes the attachment of tyrosine to tRNA(Tyr) in a two-step reaction: tyrosine is first activated by ATP to form Tyr-AMP and then transferred to the acceptor end of tRNA(Tyr). The protein is Tyrosine--tRNA ligase of Streptococcus uberis (strain ATCC BAA-854 / 0140J).